A 217-amino-acid chain; its full sequence is Uracil-DNA glycosylase (217 aa).

Residue Asp62 is the Proton acceptor of the active site.

The protein belongs to the uracil-DNA glycosylase (UDG) superfamily. UNG family.

The protein localises to the cytoplasm. It carries out the reaction Hydrolyzes single-stranded DNA or mismatched double-stranded DNA and polynucleotides, releasing free uracil.. Functionally, excises uracil residues from the DNA which can arise as a result of misincorporation of dUMP residues by DNA polymerase or due to deamination of cytosine. In Streptococcus mutans serotype c (strain ATCC 700610 / UA159), this protein is Uracil-DNA glycosylase.